A 249-amino-acid chain; its full sequence is Adenosylcobinamide-GDP ribazoletransferase (249 aa).

The next 6 helical transmembrane spans lie at 36–56, 57–77, 106–126, 133–153, 188–208, and 226–246; these read LVGF…HSIG, LNLA…GGLH, VGAM…AFLF, KLTA…LAIT, LWLF…ITWL, and GALG…GQQI.

Belongs to the CobS family. Mg(2+) is required as a cofactor.

The protein localises to the cell membrane. It carries out the reaction alpha-ribazole + adenosylcob(III)inamide-GDP = adenosylcob(III)alamin + GMP + H(+). The catalysed reaction is alpha-ribazole 5'-phosphate + adenosylcob(III)inamide-GDP = adenosylcob(III)alamin 5'-phosphate + GMP + H(+). Its pathway is cofactor biosynthesis; adenosylcobalamin biosynthesis; adenosylcobalamin from cob(II)yrinate a,c-diamide: step 7/7. Functionally, joins adenosylcobinamide-GDP and alpha-ribazole to generate adenosylcobalamin (Ado-cobalamin). Also synthesizes adenosylcobalamin 5'-phosphate from adenosylcobinamide-GDP and alpha-ribazole 5'-phosphate. In Desulforamulus reducens (strain ATCC BAA-1160 / DSM 100696 / MI-1) (Desulfotomaculum reducens), this protein is Adenosylcobinamide-GDP ribazoletransferase.